A 291-amino-acid polypeptide reads, in one-letter code: Ribosomal RNA small subunit methyltransferase A (291 aa).

Asn29, Leu31, Gly56, Glu77, Asp102, and Asn127 together coordinate S-adenosyl-L-methionine.

Belongs to the class I-like SAM-binding methyltransferase superfamily. rRNA adenine N(6)-methyltransferase family. RsmA subfamily.

It is found in the cytoplasm. It catalyses the reaction adenosine(1518)/adenosine(1519) in 16S rRNA + 4 S-adenosyl-L-methionine = N(6)-dimethyladenosine(1518)/N(6)-dimethyladenosine(1519) in 16S rRNA + 4 S-adenosyl-L-homocysteine + 4 H(+). In terms of biological role, specifically dimethylates two adjacent adenosines (A1518 and A1519) in the loop of a conserved hairpin near the 3'-end of 16S rRNA in the 30S particle. May play a critical role in biogenesis of 30S subunits. This chain is Ribosomal RNA small subunit methyltransferase A, found in Geobacillus sp. (strain WCH70).